Consider the following 559-residue polypeptide: Glucose-6-phosphate isomerase 2 (559 aa).

The active-site Proton donor is Glu367. Catalysis depends on residues His398 and Lys522.

Belongs to the GPI family.

The protein resides in the cytoplasm. The enzyme catalyses alpha-D-glucose 6-phosphate = beta-D-fructose 6-phosphate. The protein operates within carbohydrate biosynthesis; gluconeogenesis. It functions in the pathway carbohydrate degradation; glycolysis; D-glyceraldehyde 3-phosphate and glycerone phosphate from D-glucose: step 2/4. Functionally, catalyzes the reversible isomerization of glucose-6-phosphate to fructose-6-phosphate. In Chromohalobacter salexigens (strain ATCC BAA-138 / DSM 3043 / CIP 106854 / NCIMB 13768 / 1H11), this protein is Glucose-6-phosphate isomerase 2.